Reading from the N-terminus, the 136-residue chain is Photosystem II extrinsic protein U (136 aa).

Positions 1–28 are cleaved as a signal peptide; it reads MKQLAQRLFSLALVLALVLGISVQSAQA.

Belongs to the PsbU family. PSII is composed of 1 copy each of membrane proteins PsbA, PsbB, PsbC, PsbD, PsbE, PsbF, PsbH, PsbI, PsbJ, PsbK, PsbL, PsbM, PsbT, PsbX, PsbY, PsbZ, Psb30/Ycf12, peripheral proteins PsbO, CyanoQ (PsbQ), PsbU, PsbV and a large number of cofactors. It forms dimeric complexes.

It localises to the cellular thylakoid membrane. Functionally, one of the extrinsic, lumenal subunits of photosystem II (PSII). PSII is a light-driven water plastoquinone oxidoreductase, using light energy to abstract electrons from H(2)O, generating a proton gradient subsequently used for ATP formation. The extrinsic proteins stabilize the structure of photosystem II oxygen-evolving complex (OEC), the ion environment of oxygen evolution and protect the OEC against heat-induced inactivation. This is Photosystem II extrinsic protein U from Synechococcus elongatus (strain ATCC 33912 / PCC 7942 / FACHB-805) (Anacystis nidulans R2).